Here is a 501-residue protein sequence, read N- to C-terminus: Dipeptide and tripeptide permease A (501 aa).

Over 1-21 (MSTANKKPTESVSLNAFKQPK) the chain is Cytoplasmic. The chain crosses the membrane as a helical span at residues 22–44 (AFYLIFSIELWERFGYYGLQGIM). Residues 45-59 (AVYLVKQLGMSEADS) lie on the Periplasmic side of the membrane. Residues 60-80 (ITLFSSFSALVYGLVAIGGWL) traverse the membrane as a helical segment. Residues 81–89 (GDKILGTKR) are Cytoplasmic-facing. A helical transmembrane segment spans residues 90 to 110 (VIMLGAVVLAIGYALVAWSGH). D111 is a topological domain (periplasmic). Residues 112–132 (AGIVYMGMAAIAVGNGLFKAN) form a helical membrane-spanning segment. Over 133–153 (PSSLLSTCYAKDDPRLDGAFT) the chain is Cytoplasmic. The helical transmembrane segment at 154–174 (MYYMSVNIGSFFSMLATPWLA) threads the bilayer. Residues 175 to 178 (ARYG) lie on the Periplasmic side of the membrane. A helical transmembrane segment spans residues 179–199 (WSTAFALSVVGMLITVVNFAF). Residues 200–219 (CQRWVKSYGSKPDFEPINFR) lie on the Cytoplasmic side of the membrane. A helical membrane pass occupies residues 220-240 (NLLLTIVGIVVLIAVATWLLH). The Periplasmic portion of the chain corresponds to 241–246 (NQDIAR). Residues 247-267 (MVLGVIALGIVIIFGKEAFSM) form a helical membrane-spanning segment. The Cytoplasmic portion of the chain corresponds to 268-274 (HGAARRK). A helical membrane pass occupies residues 275–295 (MIVAFILMLQAIIFFVLYSQM). At 296–320 (PTSLNFFAIRNVEHSILGIAFEPEQ) the chain is on the periplasmic side. A helical membrane pass occupies residues 321 to 341 (YQALNPFWIITGSPILAAIYN). The Cytoplasmic segment spans residues 342 to 352 (RMGDTLPMPMK). The helical transmembrane segment at 353–373 (FAIGMVLCSGAFLILPLGAKF) threads the bilayer. Topologically, residues 374 to 383 (ANDAGIVSVN) are periplasmic. The chain crosses the membrane as a helical span at residues 384–404 (WLIASYGLQSIGELMISGLGL). At 405-414 (AMVAQLVPQR) the chain is on the cytoplasmic side. A helical transmembrane segment spans residues 415–435 (LMGFIMGSWFLTTAGANIIGG). The Periplasmic portion of the chain corresponds to 436-459 (YVANLMAVPSDVTDPLMSLEVYGR). Residues 460–480 (VFMQIGIATAVIAVLMLLTAP) traverse the membrane as a helical segment. The Cytoplasmic portion of the chain corresponds to 481–501 (KLNRMTQDDDTAEKGSKAATV).

Belongs to the major facilitator superfamily. Proton-dependent oligopeptide transporter (POT/PTR) (TC 2.A.17) family. DtpA subfamily.

The protein resides in the cell inner membrane. In terms of biological role, proton-dependent permease that transports di- and tripeptides. In Salmonella typhi, this protein is Dipeptide and tripeptide permease A.